Reading from the N-terminus, the 127-residue chain is Protein translocase subunit SecE (127 aa).

A run of 3 helical transmembrane segments spans residues 17–37 (VKWISISIFFILSFFINMCFY), 41–61 (LFIRIFIISCLMLCAIGTMIY), and 95–115 (FIVISVTIFISFILWSIDSVI).

This sequence belongs to the SecE/SEC61-gamma family. In terms of assembly, component of the Sec protein translocase complex. Heterotrimer consisting of SecY, SecE and SecG subunits. The heterotrimers can form oligomers, although 1 heterotrimer is thought to be able to translocate proteins. Interacts with the ribosome. Interacts with SecDF, and other proteins may be involved. Interacts with SecA.

Its subcellular location is the cell inner membrane. In terms of biological role, essential subunit of the Sec protein translocation channel SecYEG. Clamps together the 2 halves of SecY. May contact the channel plug during translocation. This is Protein translocase subunit SecE from Buchnera aphidicola subsp. Acyrthosiphon pisum (strain APS) (Acyrthosiphon pisum symbiotic bacterium).